Reading from the N-terminus, the 217-residue chain is Uridylate kinase (217 aa).

6 to 10 provides a ligand contact to ATP; sequence KLSGR. A UMP-binding site is contributed by Gly38. Gly39 and Arg43 together coordinate ATP. UMP-binding positions include Asp60 and 107 to 113; that span reads FQPGQST. ATP-binding residues include Asn134, Tyr139, and Asp142.

Belongs to the UMP kinase family. As to quaternary structure, homohexamer.

The protein localises to the cytoplasm. It catalyses the reaction UMP + ATP = UDP + ADP. The protein operates within pyrimidine metabolism; CTP biosynthesis via de novo pathway; UDP from UMP (UMPK route): step 1/1. Its activity is regulated as follows. Inhibited by UTP. Its function is as follows. Catalyzes the reversible phosphorylation of UMP to UDP. In Pyrobaculum islandicum (strain DSM 4184 / JCM 9189 / GEO3), this protein is Uridylate kinase.